A 64-amino-acid chain; its full sequence is Arasin 1 (64 aa).

Residues 1–25 (MERRTLLVVLLVCSCVVAAAAEASP) form the signal peptide. The disordered stretch occupies residues 22-43 (EASPSRWPSPGRPRPFPGRPKP). Residues 26–48 (SRWPSPGRPRPFPGRPKPIFRPR) form a pro/Arg-rich region responsible for antibacterial and antifungal activity region. Pro residues predominate over residues 31 to 43 (PGRPRPFPGRPKP). The interval 49–62 (PCNCYAPPCPCDRW) is cystein-containing C-terminal region important for stability but not essential for antimicrobial activity. Cystine bridges form between Cys-50–Cys-59 and Cys-52–Cys-57. A propeptide spanning residues 63–64 (RH) is cleaved from the precursor.

As to quaternary structure, interacts with chitin through the N-terminal region (26-48). This interaction may be important, since chitin is a component of the fungal cell wall, as well as of the crab exoskeleton (permitting a possible action of arasin in wound healing in case of lesions). Post-translationally, disulfide bonds are important for activity especially against Gram-negative bacteria, since the linearization of the peptide causes a strong decrease of activity on these bacteria. In terms of tissue distribution, mainly expressed in hemocytes. No or very low expression in heart, gills, inestines, and epidermis.

In terms of biological role, antimicrobial peptide that has a large activity spectrum with activity against Gram-positive, Gram-negative bacteria, as well as against fungi. Shows activity at micromolar concentrations. Displays minimal inhibitory concentration (MIC) values lower than minimal bactericidal concentrations (MBC). Synthetic peptides with similar activities than the full length peptide (composed of the first 23 or 25 amino acids (Arasin 1(26-48) or Arasin 1(26-50))) may have a dual mode of action depending on the peptide concentrations. At MIC concentrations, the peptide penetrates into the cytoplasm of target cells (tested on the Gram-negative E.coli). The two inner membrane proteins YgdD and SbmA may be required for this uptake. At concentrations higher than MIC, arasin may act by disrupting membranes. Full-length and N-terminal peptides do not show hemolytic activity. This Hyas araneus (Atlantic lyre crab) protein is Arasin 1.